Reading from the N-terminus, the 876-residue chain is Alanine--tRNA ligase (876 aa).

H565, H569, C667, and H671 together coordinate Zn(2+).

This sequence belongs to the class-II aminoacyl-tRNA synthetase family. It depends on Zn(2+) as a cofactor.

It localises to the cytoplasm. It carries out the reaction tRNA(Ala) + L-alanine + ATP = L-alanyl-tRNA(Ala) + AMP + diphosphate. Catalyzes the attachment of alanine to tRNA(Ala) in a two-step reaction: alanine is first activated by ATP to form Ala-AMP and then transferred to the acceptor end of tRNA(Ala). Also edits incorrectly charged Ser-tRNA(Ala) and Gly-tRNA(Ala) via its editing domain. This chain is Alanine--tRNA ligase, found in Staphylococcus epidermidis (strain ATCC 35984 / DSM 28319 / BCRC 17069 / CCUG 31568 / BM 3577 / RP62A).